Reading from the N-terminus, the 163-residue chain is uncharacterized protein (163 aa).

A coiled-coil region spans residues 136–161 (QKYIENHQKEINEHVEKLRTLHKELR).

This is an uncharacterized protein from Acanthamoeba polyphaga (Amoeba).